The sequence spans 1188 residues: MSFQVRRDRSDDRSHRFNHQQTWIPRNSSTSSVVVNEPLLPPNTDRNSETLDAGSASRPVYLQRQHNASGPPSYNHHQRSSNIGPPPPNQHRRYNAPDNQHQRSDNIGPPQPNQHRRYNAPDNQHQRSDNSGPPQPYRHRRNNAPENQHQRSDNIGPPPPNRQRRNNASGTLPDNRQRVASRTRPVNQGKRVAKEENVVLTDPNLPQLVQELQEKLVKSSIECMICYDKVGRSANIWSCSSCYSIFHINCIKRWARAPTSVDLLAEKNQGDNWRCPGCQSVQLTSSKEISYRCFCGKRRDPPSDPYLTPHSCGEPCGKPLEKEFAPAETTEEDLCPHVCVLQCHPGPCPPCKAFAPPRSCPCGKKMVTTRCSERRSDLVCGQRCDKLLSCGRHQCERTCHVGPCDPCQVLVNATCFCKKKVETVICGDMNVKGELKAEDGVYSCSFNCGKPLGCGNHFCSEVCHPGPCGDCDLLPSRVKTCYCGNTRLEEQIRQSCLDPIPSCSNVCRKLLPCRLHTCNEMCHAGDCPPCLVQVNQKCRCGSTSRAVECYITTSSEAEKFVCAKPCGRKKNCGRHRCSERCCPLLNGKKNDLSGDWDPHVCQIPCQKKLRCGQHSCESLCHSGHCPPCLEMIFTDLTCACGRTSIPPPLSCGTPVPSCQLPCPIPQPCGHSDTHGCHFGDCPPCSTPVEKKCVGGHVVLRNIPCGLKDIRCTKICGKTRRCGMHACARTCHPEPCDSFNESEAGMRVTCRQKCGAPRTDCRHTCAALCHPSAPCPDLRCEFSVTITCSCGRITATVPCDAGGRSANGSNVYCAAYDEASVLQKLPAPLQPVESSGNRIPLGQRKLSCDDECAKLERKRVLQDAFDITPPNLEALHFSENSAMTEIISDLYRRDPKWVLAVEERCKFLVLGKARGSTSALKVHIFCPMQKDKRDTVRLIAERWKLGVSNAGWEPKRFTVVHVTAKSKPPTRIIGARGGAISIGGPHPPFYDSLVDMDPGLVVSFLDLPREANISALVLRFGGECELVWLNDKNALAVFHDHARAATAMRRLEHGSVYHGAVVVQSGGQSPSLNNVWGKLPGSSAWDVDKGNPWRRAVIQESDDSWGAEDSPIGGSSTDAQASALRSAKSNSPIVTSVNRWSVLEPKKASTSTLEPIAQIEESSSSKTTGKQPVEGSGEEVVDDWEKVCE.

Basic and acidic residues predominate over residues Met-1–His-15. 2 disordered regions span residues Met-1 to Asp-52 and Gln-65 to Glu-195. Polar residues-rich tracts occupy residues His-19–Val-34 and Ala-168–Val-186. Residues Cys-223–Gln-279 form an RING-type; degenerate zinc finger. 9 consecutive NF-X1-type zinc fingers follow at residues Cys-335–Ala-353, Cys-390–Val-409, Cys-454–Leu-473, Cys-513–Val-532, Cys-572–Lys-607, Cys-611–Glu-630, Cys-668–Thr-686, Cys-721–Gln-751, and Cys-760–Phe-781. Residues Pro-894 to Ala-963 enclose the R3H domain. A disordered region spans residues Ser-1100–Glu-1188. Polar residues-rich tracts occupy residues Ala-1126 to Arg-1138 and Glu-1159 to Lys-1169.

It belongs to the NFX1 family. As to expression, expressed in seedlings, roots, stems, leaves, buds, flowers and siliques.

The protein resides in the nucleus. It participates in protein modification; protein ubiquitination. Its function is as follows. Mediates E2-dependent ubiquitination. Confers resistance to osmotic stress such as high salinity. Promotes H(2)O(2) production. Negative regulator of some defense-related genes via an salicylic acid (SA)-dependent signaling pathway. Confers susceptibility to the compatible phytopathogen Pseudomonas syringae pv. tomato strain DC3000 (Pst DC3000). Mediates resistance to type A trichothecenes (phytotoxins produced by phytopathogenic fungi). The protein is NF-X1-type zinc finger protein NFXL1 (NFXL1) of Arabidopsis thaliana (Mouse-ear cress).